A 1940-amino-acid chain; its full sequence is Myosin-3 (1940 aa).

In terms of domain architecture, Myosin N-terminal SH3-like spans 33–82 (DAKTYCFVVDSKEEYAKGKIKSSQDGKVTVETEDNRTLVVKPEDVYAMNP). The 694-residue stretch at 86–779 (DRIEDMAMLT…LLGTLEEMRD (694 aa)) folds into the Myosin motor domain. Lys-130 bears the N6,N6,N6-trimethyllysine mark. Position 179–186 (179–186 (GESGAGKT)) interacts with ATP. Actin-binding regions lie at residues 656-678 (LNKLMSNLRTTHPHFVRCIIPNE) and 758-772 (KFGHTKVFFKAGLLG). The 30-residue stretch at 782–811 (LAKLITRTQAVCRGFLMRVEFQKMVQRRES) folds into the IQ domain. A coiled-coil region spans residues 840–1933 (LLKSAETEKE…KTRDFTSSRM (1094 aa)).

The protein belongs to the TRAFAC class myosin-kinesin ATPase superfamily. Myosin family. Muscle myosin is a hexameric protein that consists of 2 heavy chain subunits (MHC), 2 alkali light chain subunits (MLC) and 2 regulatory light chain subunits (MLC-2). In terms of tissue distribution, expressed in fetal bone, thymus, placenta, heart, brain, and liver.

Its subcellular location is the cytoplasm. It is found in the myofibril. Muscle contraction. This chain is Myosin-3 (MYH3), found in Homo sapiens (Human).